The sequence spans 90 residues: Probable Fe(2+)-trafficking protein (90 aa).

The protein belongs to the Fe(2+)-trafficking protein family.

Functionally, could be a mediator in iron transactions between iron acquisition and iron-requiring processes, such as synthesis and/or repair of Fe-S clusters in biosynthetic enzymes. This is Probable Fe(2+)-trafficking protein from Vibrio vulnificus (strain CMCP6).